Here is a 1482-residue protein sequence, read N- to C-terminus: Cystic fibrosis transmembrane conductance regulator (1482 aa).

Over 1–77 (MQKSPLERAS…KLINALRRCF (77 aa)) the chain is Cytoplasmic. The chain crosses the membrane as a helical span at residues 78–98 (FWRFVFYGILLYLGEVTKAVQ). An ABC transmembrane type-1 1 domain is found at 81–365 (FVFYGILLYL…WAVQTWYDSL (285 aa)). At 99–122 (PLLLGRIIASYDPDNKVERSIAIY) the chain is on the extracellular side. Residues 123 to 146 (LAIGLCLLFIVRTLLLHPAIFGLH) traverse the membrane as a helical segment. At 147–195 (HMGMQMRIAMFSLIYKKTLKLSSRVLDKISIGQLVSLLSNNLNKFDEGL) the chain is on the cytoplasmic side. Residues 196-216 (ALAHFVWIAPLQVTLLMGLIW) form a helical membrane-spanning segment. Residues 217 to 222 (DLLQAS) lie on the Extracellular side of the membrane. A helical transmembrane segment spans residues 223-243 (AFCGLAFLIIVALGQAGLGRM). Residues 244 to 298 (MMKYRDKRAGKINERLVITSEMIENIQSVKAYCWEEAMEKMIENLRQIELRLTRK) are Cytoplasmic-facing. The chain crosses the membrane as a helical span at residues 299–319 (AAYVRYFNSAAFFFSGFFVVF). The Extracellular portion of the chain corresponds to 320–339 (LSVLPYAMLKGIILRKIFTT). A helical transmembrane segment spans residues 340–358 (ISFCIVLRMAVTRQFPWAV). The Cytoplasmic segment spans residues 359 to 858 (QTWYDSLGAI…YLRYVTVHKS (500 aa)). Residues W401, S434, 458–465 (GSTGAGKT), and Q493 contribute to the ATP site. The region spanning 423–646 (NGDNSLFFSN…RPDFSSELMG (224 aa)) is the ABC transporter 1 domain. C524 carries S-palmitoyl cysteine lipidation. Phosphoserine occurs at positions 549 and 660. A disordered R region region spans residues 654-831 (SAERRNSILT…EEINEEDLKE (178 aa)). At S670 the chain carries Phosphoserine; by PKA. A Phosphoserine modification is found at S685. Residue K687 forms a Glycyl lysine isopeptide (Lys-Gly) (interchain with G-Cter in ubiquitin) linkage. 2 positions are modified to phosphoserine: S699 and S711. A Phosphothreonine modification is found at T716. Phosphoserine occurs at positions 736, 767, 790, 795, and 813. A helical membrane pass occupies residues 859–879 (LIFVLIWCLVVFLAEVAVSLV). The ABC transmembrane type-1 2 domain maps to 859–1156 (LIFVLIWCLV…AVNSSIDVDS (298 aa)). The Extracellular segment spans residues 880 to 919 (VLYLLRTSSLQDKGNNTTVNANSSYGVIVTNTSSYYLLYI). N894, N895, N901, and N910 each carry an N-linked (GlcNAc...) asparagine glycan. Residues 920 to 940 (YVGIADSLFALAIFRGLPLVH) traverse the membrane as a discontinuously helical segment. Topologically, residues 941–991 (TLIKVSKTLHHKMLRSILQAPMSTFNTLKAGRILNRFSKDIAILDDLLPLT) are cytoplasmic. The helical transmembrane segment at 992 to 1012 (MFDFIQLLLIVIGAVVVVSVL) threads the bilayer. Over 1013–1014 (QP) the chain is Extracellular. Residues 1015–1035 (YIFLATVPVIAAFIILRAYFL) form a helical membrane-spanning segment. At 1036 to 1096 (HTSQQLKQLE…TANWFLYLST (61 aa)) the chain is on the cytoplasmic side. The chain crosses the membrane as a helical span at residues 1097-1117 (LRWFQMRIEIIFVIFFIAVTF). The Extracellular segment spans residues 1118 to 1131 (VSILTTGEGEGTIG). Residues 1132 to 1152 (IILTLAMNIMNTLQWAVNSSI) form a helical membrane-spanning segment. Residues 1153–1482 (DVDSLMRSVS…TEEEVQETRL (330 aa)) are Cytoplasmic-facing. Positions 1212–1445 (MTVKDLTAKY…KSLFRQAISP (234 aa)) constitute an ABC transporter 2 domain. ATP contacts are provided by residues Y1221 and 1246–1253 (GRTGSGKS). The tract at residues 1388–1482 (RTLKQAFADC…TEEEVQETRL (95 aa)) is interaction with GORASP2. Residue C1397 is the site of S-palmitoyl cysteine attachment. The segment covering 1454–1463 (HRNSSRHRSR) has biased composition (basic residues). A disordered region spans residues 1454 to 1482 (HRNSSRHRSRSQIAALKEETEEEVQETRL). S1458 carries the post-translational modification Phosphoserine. The span at 1472-1482 (ETEEEVQETRL) shows a compositional bias: acidic residues. A PDZ-binding motif is present at residues 1480–1482 (TRL).

This sequence belongs to the ABC transporter superfamily. ABCC family. CFTR transporter (TC 3.A.1.202) subfamily. In terms of assembly, monomer; does not require oligomerization for channel activity. May form oligomers in the membrane. Interacts with SLC26A3, SLC26A6 and NHERF1. Interacts with SHANK2. Interacts with MYO6. Interacts (via C-terminus) with GOPC (via PDZ domain); this promotes CFTR internalization and thereby decreases channel activity. Interacts with SLC4A7 through NHERF1. Found in a complex with MYO5B and RAB11A. Interacts with ANO1. Interacts with SLC26A8. Interacts with AHCYL1; the interaction increases CFTR activity. Interacts with CSE1L. The core-glycosylated form interacts with GORASP2 (via PDZ GRASP-type 1 domain) in respone to ER stress. Interacts with MARCHF2; the interaction leads to CFTR ubiqtuitination and degradation. Interacts with ADGRG2. In terms of processing, N-glycosylated. Phosphorylated; cAMP treatment promotes phosphorylation and activates the channel. Dephosphorylation decreases the ATPase activity (in vitro). Phosphorylation at PKA sites activates the channel. Phosphorylation at PKC sites enhances the response to phosphorylation by PKA. Phosphorylated by AMPK; this inhibits channel activity. Post-translationally, ubiquitinated, leading to its degradation in the lysosome. Deubiquitination by USP10 in early endosomes enhances its endocytic recycling to the cell membrane. Ubiquitinated by RNF185 during ER stress. Ubiquitinated by MARCHF2.

The protein resides in the apical cell membrane. It localises to the early endosome membrane. It is found in the cell membrane. Its subcellular location is the recycling endosome membrane. The protein localises to the endoplasmic reticulum membrane. The protein resides in the nucleus. The catalysed reaction is ATP + H2O + closed Cl(-) channel = ADP + phosphate + open Cl(-) channel.. It catalyses the reaction chloride(in) = chloride(out). The enzyme catalyses hydrogencarbonate(in) = hydrogencarbonate(out). It carries out the reaction ATP + H2O = ADP + phosphate + H(+). In terms of biological role, epithelial ion channel that plays an important role in the regulation of epithelial ion and water transport and fluid homeostasis. Mediates the transport of chloride ions across the cell membrane. Possesses an intrinsic ATPase activity and utilizes ATP to gate its channel; the passive flow of anions through the channel is gated by cycles of ATP binding and hydrolysis by the ATP-binding domains. The ion channel is also permeable to HCO(3)(-); selectivity depends on the extracellular chloride concentration. Exerts its function also by modulating the activity of other ion channels and transporters. Contributes to the regulation of the pH and the ion content of the epithelial fluid layer. Modulates the activity of the epithelial sodium channel (ENaC) complex, in part by regulating the cell surface expression of the ENaC complex. May regulate bicarbonate secretion and salvage in epithelial cells by regulating the transporter SLC4A7. Can inhibit the chloride channel activity of ANO1. Plays a role in the chloride and bicarbonate homeostasis during sperm epididymal maturation and capacitation. The polypeptide is Cystic fibrosis transmembrane conductance regulator (Loxodonta africana (African elephant)).